Reading from the N-terminus, the 579-residue chain is Fatty-acid amide hydrolase 1 (579 aa).

A helical membrane pass occupies residues 9–29; that stretch reads TLSGVSGVCLACSLLSAAVVL. Residues 30 to 403 are Cytoplasmic-facing; the sequence is RWTGRQKARG…GDFVDPCLGD (374 aa). K142 (charge relay system) is an active-site residue. Substrate contacts are provided by residues M191, S217, and 238–241; that span reads IGGS. S217 serves as the catalytic Charge relay system. The active-site Acyl-ester intermediate is S241. Position 241 is a phosphoserine (S241). An intramembrane segment occupies 404–433; that stretch reads LILILRLPSWFKRLLSLLLKPLFPRLAAFL. The Cytoplasmic portion of the chain corresponds to 434-579; the sequence is NSMRPRSAEK…QLMTPQKQPS (146 aa).

The protein belongs to the amidase family. As to quaternary structure, homodimer. In terms of tissue distribution, found in neuronal cells throughout the CNS. Expressed in liver and brain, and to a lesser extent in spleen, lung, kidney and testes.

Its subcellular location is the endoplasmic reticulum membrane. It localises to the golgi apparatus membrane. It catalyses the reaction N-(5Z,8Z,11Z,14Z-eicosatetraenoyl)-ethanolamine + H2O = ethanolamine + (5Z,8Z,11Z,14Z)-eicosatetraenoate. The enzyme catalyses (9Z)-octadecenamide + H2O = (9Z)-octadecenoate + NH4(+). It carries out the reaction 2-(5Z,8Z,11Z,14Z-eicosatetraenoyl)-glycerol + H2O = glycerol + (5Z,8Z,11Z,14Z)-eicosatetraenoate + H(+). The catalysed reaction is (9Z,12Z,15Z)-octadecatrienamide + H2O = (9Z,12Z,15Z)-octadecatrienoate + NH4(+). It catalyses the reaction (5Z,8Z,11Z,14Z)-eicosatetraenamide + H2O = (5Z,8Z,11Z,14Z)-eicosatetraenoate + NH4(+). The enzyme catalyses (6Z)-octadecenamide + H2O = (6Z)-octadecenoate + NH4(+). It carries out the reaction (15Z)-tetracosenamide + H2O = (15Z)-tetracosenoate + NH4(+). The catalysed reaction is (8Z,11Z,14Z)-eicosatrienamide + H2O = (8Z,11Z,14Z)-eicosatrienoate + NH4(+). It catalyses the reaction (11Z,14Z,17Z)-eicosatrienamide + H2O = (11Z,14Z,17Z)-eicosatrienoate + NH4(+). The enzyme catalyses (11Z,14Z)-eicosadienamide + H2O = (11Z,14Z)-eicosadienoate + NH4(+). It carries out the reaction (9Z,12Z)-octadecadienamide + H2O = (9Z,12Z)-octadecadienoate + NH4(+). The catalysed reaction is tetradecamide + H2O = tetradecanoate + NH4(+). It catalyses the reaction N-(9Z-octadecenoyl) ethanolamine + H2O = ethanolamine + (9Z)-octadecenoate. The enzyme catalyses N-(9Z-octadecenoyl)-taurine + H2O = taurine + (9Z)-octadecenoate. It carries out the reaction 1-O-methyl-(5Z,8Z,11Z,14Z)-eicosatetraenoate + H2O = methanol + (5Z,8Z,11Z,14Z)-eicosatetraenoate + H(+). The catalysed reaction is (11Z)-eicosenamide + H2O = (11Z)-eicosenoate + NH4(+). It catalyses the reaction N-(9Z-hexadecenoyl) ethanolamine + H2O = (9Z)-hexadecenoate + ethanolamine. The enzyme catalyses N-octadecanoyl ethanolamine + H2O = octadecanoate + ethanolamine. It carries out the reaction N-docosanoyl-ethanolamine + H2O = docosanoate + ethanolamine. The catalysed reaction is N-tetracosanoyl-taurine + H2O = tetracosanoate + taurine. It catalyses the reaction N-(15Z-tetracosenoyl)-ethanolamine + H2O = (15Z)-tetracosenoate + ethanolamine. The enzyme catalyses N-docosanoyl-taurine + H2O = docosanoate + taurine. It carries out the reaction N-(15Z-tetracosenoyl)-taurine + H2O = (15Z)-tetracosenoate + taurine. The catalysed reaction is N-tricosanoyl-taurine + H2O = tricosanoate + taurine. It catalyses the reaction (9Z)-octadecenoate + glycine = N-(9Z-octadecenoyl)glycine + H2O. The enzyme catalyses N-(5Z,8Z,11Z,14Z)-eicosatetraenoyl-glycine + H2O = (5Z,8Z,11Z,14Z)-eicosatetraenoate + glycine. It carries out the reaction N-(5Z,8Z,11Z,14Z-eicosatetraenoyl)-L-serine + H2O = (5Z,8Z,11Z,14Z)-eicosatetraenoate + L-serine. Its activity is regulated as follows. inhibited by trifluoromethyl ketone. Its function is as follows. Catalyzes the hydrolysis of endogenous amidated lipids like the sleep-inducing lipid oleamide ((9Z)-octadecenamide), the endocannabinoid anandamide (N-(5Z,8Z,11Z,14Z-eicosatetraenoyl)-ethanolamine), as well as other fatty amides, to their corresponding fatty acids, thereby regulating the signaling functions of these molecules. Hydrolyzes polyunsaturated substrate anandamide preferentially as compared to monounsaturated substrates. It can also catalyze the hydrolysis of the endocannabinoid 2-arachidonoylglycerol (2-(5Z,8Z,11Z,14Z-eicosatetraenoyl)-glycerol). FAAH cooperates with PM20D1 in the hydrolysis of amino acid-conjugated fatty acids such as N-fatty acyl glycine and N-fatty acyl-L-serine, thereby acting as a physiological regulator of specific subsets of intracellular, but not of extracellular, N-fatty acyl amino acids. The protein is Fatty-acid amide hydrolase 1 (Faah) of Rattus norvegicus (Rat).